A 60-amino-acid chain; its full sequence is Cytotoxin 2a (60 aa).

Disulfide bonds link Cys3–Cys21, Cys14–Cys38, Cys42–Cys53, and Cys54–Cys59.

This sequence belongs to the three-finger toxin family. Short-chain subfamily. Type IA cytotoxin sub-subfamily. As to quaternary structure, monomer in solution; Homodimer and oligomer in the presence of negatively charged lipids forming a pore with a size ranging between 20 and 30 Angstroms. In terms of tissue distribution, expressed by the venom gland.

It is found in the secreted. It localises to the target cell membrane. Its function is as follows. Shows cytolytic activity on many different cells by forming pore in lipid membranes. In vivo, increases heart rate or kills the animal by cardiac arrest. In addition, it binds to heparin with high affinity, interacts with Kv channel-interacting protein 1 (KCNIP1) in a calcium-independent manner, and binds to integrin alpha-V/beta-3 (ITGAV/ITGB3) with moderate affinity. Preferentially binds acidic phospholipids like phosphatidylserine, phosphatidic acid and phosphatidyl glycerol. Has hemolytic activity towards human erythrocytes (EC(50)=1.024 uM) and cytolytic activity towards various cell lines. The chain is Cytotoxin 2a from Naja naja (Indian cobra).